Reading from the N-terminus, the 47-residue chain is Turripeptide Ici9.1 (47 aa).

3 disulfide bridges follow: C1–C31, C5–C24, and C13–C45. One can recognise a Kazal-like domain in the interval C1 to Q47.

Belongs to the conopeptide P-like superfamily. As to expression, expressed by the venom duct.

Its subcellular location is the secreted. Acts as a neurotoxin by inhibiting an ion channel. May also act as a serine protease inhibitor, since it possess the kazal serine protease inhibitor signature. The protein is Turripeptide Ici9.1 of Iotyrris cingulifera (Sea snail).